The primary structure comprises 170 residues: Adenine phosphoribosyltransferase (170 aa).

This sequence belongs to the purine/pyrimidine phosphoribosyltransferase family. Homodimer.

The protein localises to the cytoplasm. It carries out the reaction AMP + diphosphate = 5-phospho-alpha-D-ribose 1-diphosphate + adenine. It functions in the pathway purine metabolism; AMP biosynthesis via salvage pathway; AMP from adenine: step 1/1. In terms of biological role, catalyzes a salvage reaction resulting in the formation of AMP, that is energically less costly than de novo synthesis. In Prochlorococcus marinus (strain MIT 9312), this protein is Adenine phosphoribosyltransferase.